The primary structure comprises 266 residues: Beta-lactamase OXA-11 (266 aa).

Residues 1 to 20 (MKTFAAYVIIACLSSTALAG) form the signal peptide. Catalysis depends on S67, which acts as the Acyl-ester intermediate. K70 carries the post-translational modification N6-carboxylysine. 205 to 207 (KTG) lines the substrate pocket.

The protein belongs to the class-D beta-lactamase family.

The catalysed reaction is a beta-lactam + H2O = a substituted beta-amino acid. In terms of biological role, hydrolyzes carbenicillin, oxacillin and cephalosporin. Does not hydrolyze cefoxitin or carbapenems. The sequence is that of Beta-lactamase OXA-11 (bla) from Pseudomonas aeruginosa.